Reading from the N-terminus, the 102-residue chain is Citrate lyase acyl carrier protein (102 aa).

Residue Ser14 is modified to O-(phosphoribosyl dephospho-coenzyme A)serine.

It belongs to the CitD family. As to quaternary structure, oligomer with a subunit composition of (alpha,beta,gamma)6.

It localises to the cytoplasm. In terms of biological role, covalent carrier of the coenzyme of citrate lyase. The chain is Citrate lyase acyl carrier protein from Serratia proteamaculans (strain 568).